The sequence spans 838 residues: Valine--tRNA ligase (838 aa).

The short motif at 46-56 (PNLTGTLHIGH) is the 'HIGH' region element. Residues 514 to 518 (KMSKS) carry the 'KMSKS' region motif. K517 is a binding site for ATP. Residues 768–838 (VDNAANNLAH…HLIAKLTKAE (71 aa)) adopt a coiled-coil conformation.

Belongs to the class-I aminoacyl-tRNA synthetase family. ValS type 1 subfamily. As to quaternary structure, monomer.

The protein localises to the cytoplasm. The enzyme catalyses tRNA(Val) + L-valine + ATP = L-valyl-tRNA(Val) + AMP + diphosphate. Functionally, catalyzes the attachment of valine to tRNA(Val). As ValRS can inadvertently accommodate and process structurally similar amino acids such as threonine, to avoid such errors, it has a 'posttransfer' editing activity that hydrolyzes mischarged Thr-tRNA(Val) in a tRNA-dependent manner. This chain is Valine--tRNA ligase, found in Mycoplasma pneumoniae (strain ATCC 29342 / M129 / Subtype 1) (Mycoplasmoides pneumoniae).